The chain runs to 170 residues: Shikimate kinase (170 aa).

ATP is bound at residue 15–20; that stretch reads GTGKTT. T19 serves as a coordination point for Mg(2+). Substrate-binding residues include D37, R61, and G82. R120 provides a ligand contact to ATP. R138 lines the substrate pocket. Q154 contributes to the ATP binding site.

The protein belongs to the shikimate kinase family. Monomer. Mg(2+) serves as cofactor.

The protein localises to the cytoplasm. It carries out the reaction shikimate + ATP = 3-phosphoshikimate + ADP + H(+). The protein operates within metabolic intermediate biosynthesis; chorismate biosynthesis; chorismate from D-erythrose 4-phosphate and phosphoenolpyruvate: step 5/7. Functionally, catalyzes the specific phosphorylation of the 3-hydroxyl group of shikimic acid using ATP as a cosubstrate. The polypeptide is Shikimate kinase (Staphylococcus epidermidis (strain ATCC 35984 / DSM 28319 / BCRC 17069 / CCUG 31568 / BM 3577 / RP62A)).